The primary structure comprises 126 residues: Large ribosomal subunit protein bL12 (126 aa).

The protein belongs to the bacterial ribosomal protein bL12 family. In terms of assembly, homodimer. Part of the ribosomal stalk of the 50S ribosomal subunit. Forms a multimeric L10(L12)X complex, where L10 forms an elongated spine to which 2 to 4 L12 dimers bind in a sequential fashion. Binds GTP-bound translation factors.

In terms of biological role, forms part of the ribosomal stalk which helps the ribosome interact with GTP-bound translation factors. Is thus essential for accurate translation. In Saccharophagus degradans (strain 2-40 / ATCC 43961 / DSM 17024), this protein is Large ribosomal subunit protein bL12.